The following is a 275-amino-acid chain: MKWIKSTGSIGLSLLLFLSSFSHSLYAAPLRVISLSPSTTELAYAAGLGDNLIAASAYSDYPPQARKLEQVANWQGINLERIITLKPELILAWRGGNPQRPLEQLAAFGIKIFYSDPTTTEQIAQDLERLAEYSPHPEQAKKSATELRQRFANLQQQYATTTPKPAFLQFGTYPLFTTSGQTLQSEVLSICGGRNIFANSPVPWPQVSREQVLIRKPEIIVISGGQEQVKLIENFWHPQLRAKVITLHEDWFHRAGPRIILAAEQLCQQLNDNGS.

Positions 1–27 are cleaved as a signal peptide; that stretch reads MKWIKSTGSIGLSLLLFLSSFSHSLYA. Residues 31-275 enclose the Fe/B12 periplasmic-binding domain; the sequence is RVISLSPSTT…LCQQLNDNGS (245 aa). Residue tyrosine 58 participates in cyanocob(III)alamin binding. Cysteine 191 and cysteine 267 are oxidised to a cystine.

This sequence belongs to the BtuF family. As to quaternary structure, the complex is composed of two ATP-binding proteins (BtuD), two transmembrane proteins (BtuC) and a solute-binding protein (BtuF).

It is found in the periplasm. In terms of biological role, part of the ABC transporter complex BtuCDF involved in vitamin B12 import. Binds vitamin B12 and delivers it to the periplasmic surface of BtuC. The sequence is that of Vitamin B12-binding protein from Photorhabdus laumondii subsp. laumondii (strain DSM 15139 / CIP 105565 / TT01) (Photorhabdus luminescens subsp. laumondii).